Reading from the N-terminus, the 428-residue chain is Monocarboxylate transporter 13 (428 aa).

The Cytoplasmic portion of the chain corresponds to 1 to 10 (MVHRTEPPDG). Helical transmembrane passes span 11–31 (GWGW…FGVL), 52–72 (VSWI…IGSA), 81–101 (PVVM…SFAT), 106–126 (LYLS…TPTL), 139–159 (LAMG…APLF), 172–192 (LLLV…LRPL), 221–241 (VALT…VAHL), 244–264 (LGWD…SDLV), 283–303 (LLML…VAQA), 309–329 (VLAV…FSVI), 338–358 (IYCG…LGAP), and 374–394 (FVVA…LPHF). Residues 395–428 (FSCISLSTSRPQDLVIEAPDTKIPLPKEEGLGEN) are Cytoplasmic-facing.

The protein belongs to the major facilitator superfamily. Monocarboxylate porter (TC 2.A.1.13) family.

The protein resides in the golgi apparatus membrane. It is found in the cell membrane. In terms of biological role, proton-linked monocarboxylate transporter. May catalyze the transport of monocarboxylates across the plasma membrane. This chain is Monocarboxylate transporter 13 (Slc16a13), found in Rattus norvegicus (Rat).